The chain runs to 449 residues: UDP-N-acetylmuramate--L-alanine ligase (449 aa).

ATP is bound at residue glycine 121–serine 127.

The protein belongs to the MurCDEF family.

Its subcellular location is the cytoplasm. The catalysed reaction is UDP-N-acetyl-alpha-D-muramate + L-alanine + ATP = UDP-N-acetyl-alpha-D-muramoyl-L-alanine + ADP + phosphate + H(+). Its pathway is cell wall biogenesis; peptidoglycan biosynthesis. Its function is as follows. Cell wall formation. The protein is UDP-N-acetylmuramate--L-alanine ligase of Helicobacter pylori (strain HPAG1).